Here is a 316-residue protein sequence, read N- to C-terminus: tRNA-cytidine(32) 2-sulfurtransferase (316 aa).

The segment at 1–31 (MGAVIDDSMPGPGADATGTGPSDARTERETR) is disordered. Over residues 10–21 (PGPGADATGTGP) the composition is skewed to low complexity. A PP-loop motif motif is present at residues 62–67 (SGGKDS). Residues Cys-137, Cys-140, and Cys-228 each contribute to the [4Fe-4S] cluster site.

This sequence belongs to the TtcA family. In terms of assembly, homodimer. Requires Mg(2+) as cofactor. It depends on [4Fe-4S] cluster as a cofactor.

Its subcellular location is the cytoplasm. It catalyses the reaction cytidine(32) in tRNA + S-sulfanyl-L-cysteinyl-[cysteine desulfurase] + AH2 + ATP = 2-thiocytidine(32) in tRNA + L-cysteinyl-[cysteine desulfurase] + A + AMP + diphosphate + H(+). Its pathway is tRNA modification. Functionally, catalyzes the ATP-dependent 2-thiolation of cytidine in position 32 of tRNA, to form 2-thiocytidine (s(2)C32). The sulfur atoms are provided by the cysteine/cysteine desulfurase (IscS) system. This chain is tRNA-cytidine(32) 2-sulfurtransferase, found in Verminephrobacter eiseniae (strain EF01-2).